The chain runs to 552 residues: Cation/acetate symporter ActP (552 aa).

Helical transmembrane passes span 6–26 (LLAVLALLLSGPVVAADAIAG), 35–55 (MEAIVMFLIFVAMTLGITYWA), 78–98 (GLAMAGDFMSAASFLGISALV), 103–123 (FDGLIYSLGFLVGWPIILFLI), 151–171 (LSACGSLVVVALYLIAQMVGA), 185–205 (VAVVLVGILMVMYVLFGGMLA), 208–228 (WVQIIKAVLLLFGASFMAIMV), 264–284 (ISALSLGLGLMFGTAGLPHIL), 305–325 (GLMGYFYFLTFIIGFGAILLV), 357–377 (LFLGFISAVAFATILAVVAGL), 407–427 (VSKITVVALGVVAILLGILFE), 431–451 (IAFMVGLAFSIAASCNFPIIL), 467–487 (GGWLGLLTAVILMILGPTIWV), and 496–516 (IFPYEYPALFSMLVAFIGTWL).

This sequence belongs to the sodium:solute symporter (SSF) (TC 2.A.21) family.

The protein localises to the cell inner membrane. Transports acetate. The protein is Cation/acetate symporter ActP of Erwinia tasmaniensis (strain DSM 17950 / CFBP 7177 / CIP 109463 / NCPPB 4357 / Et1/99).